We begin with the raw amino-acid sequence, 380 residues long: High affinity transport system protein p37 (380 aa).

Positions 1–26 (MLKRKKLLQGFLKFLPLIIPATIFVS) are cleaved as a signal peptide. Cysteine 27 carries N-palmitoyl cysteine lipidation. Cysteine 27 carries S-diacylglycerol cysteine lipidation. A disordered region spans residues 285–304 (NHFYTPTENNGKGDSEKSNN).

It localises to the cell membrane. P37 is part of a high-affinity transport system. This Mycoplasma pneumoniae (strain ATCC 29342 / M129 / Subtype 1) (Mycoplasmoides pneumoniae) protein is High affinity transport system protein p37 (p37).